A 447-amino-acid polypeptide reads, in one-letter code: Pentatricopeptide repeat-containing protein At3g53170 (447 aa).

PPR repeat units follow at residues 93-127, 128-158, 164-198, 199-233, 235-269, 270-304, 305-339, 340-374, 375-409, and 410-444; these read RCKT…GLKP, TIDV…MKSV, DVFT…GVGC, STVT…GDSL, DVCT…GVQP, DITT…FFSL, TTVT…GVKP, NSIT…DVVL, DTPF…KCKP, and DKIT…GENL.

It belongs to the PPR family. P subfamily.

This is Pentatricopeptide repeat-containing protein At3g53170 from Arabidopsis thaliana (Mouse-ear cress).